The following is a 224-amino-acid chain: 4'-phosphopantetheinyl transferase ffp (224 aa).

Mg(2+)-binding residues include aspartate 107, glutamate 109, and glutamate 151. The segment at 158-189 is peptidyl carrier protein binding; sequence GKGLSLPLDSFSVRLHEDGRVSVELPEHHTPC.

The protein belongs to the P-Pant transferase superfamily. Gsp/Sfp/HetI/AcpT family. The cofactor is Mg(2+).

It catalyses the reaction apo-[peptidyl-carrier protein] + CoA = holo-[peptidyl-carrier protein] + adenosine 3',5'-bisphosphate + H(+). In terms of biological role, may activate the peptidyl carrier protein (PCP) domains of fengycin synthase by transferring the 4'-phosphopantetheinyl moiety of coenzyme A (CoA) to a serine residue. The polypeptide is 4'-phosphopantetheinyl transferase ffp (ffp) (Bacillus subtilis).